Reading from the N-terminus, the 396-residue chain is Cytochrome b (396 aa).

4 helical membrane-spanning segments follow: residues 32–52 (FGSL…TLAM), 76–98 (WLLR…LHIG), 113–133 (LWSI…IGYV), and 179–199 (FFSL…MHLL). Positions 82 and 96 each coordinate heme b. Residues His183 and His197 each coordinate heme b. His202 lines the a ubiquinone pocket. 4 consecutive transmembrane segments (helical) span residues 225-245 (FTSK…IFVF), 289-309 (LGGV…ALIH), 321-341 (LLNL…WVGA), and 348-368 (YILI…ILMI).

Belongs to the cytochrome b family. Fungal cytochrome b-c1 complex contains 10 subunits; 3 respiratory subunits, 2 core proteins and 5 low-molecular weight proteins. Cytochrome b-c1 complex is a homodimer. It depends on heme b as a cofactor.

The protein resides in the mitochondrion inner membrane. Functionally, component of the ubiquinol-cytochrome c reductase complex (complex III or cytochrome b-c1 complex) that is part of the mitochondrial respiratory chain. The b-c1 complex mediates electron transfer from ubiquinol to cytochrome c. Contributes to the generation of a proton gradient across the mitochondrial membrane that is then used for ATP synthesis. The protein is Cytochrome b (cob) of Spizellomyces punctatus.